Reading from the N-terminus, the 167-residue chain is Leukotoxin-activating lysine-acyltransferase LktC serotype T3 (167 aa).

Residues H22 and D91 contribute to the active site.

Belongs to the RTX toxin acyltransferase family.

It is found in the cytoplasm. It catalyses the reaction a fatty acyl-[ACP] + L-lysyl-[protein] = N(6)-(fatty acyl)-L-lysyl-[protein] + holo-[ACP] + H(+). Functionally, involved in fatty acylation of the protoxin (LktA) at two internal lysine residues, thereby converting it to the active toxin. The chain is Leukotoxin-activating lysine-acyltransferase LktC serotype T3 (lktC) from Mannheimia haemolytica (Pasteurella haemolytica).